The primary structure comprises 754 residues: Probable beta-glucosidase D (754 aa).

Residues 1–20 (MKVLSFIVAAALLGLTGASS) form the signal peptide. 3 N-linked (GlcNAc...) asparagine glycosylation sites follow: N66, N69, and N186. The interval 186–206 (NRTGGGGGGGGDSGSAPYSSN) is disordered. Residues 188–198 (TGGGGGGGGDS) show a composition bias toward gly residues. Residue N239 is glycosylated (N-linked (GlcNAc...) asparagine). D267 is an active-site residue. N-linked (GlcNAc...) asparagine glycans are attached at residues N301, N345, N443, N512, N534, N573, N588, N655, and N745.

Belongs to the glycosyl hydrolase 3 family.

The protein resides in the secreted. The catalysed reaction is Hydrolysis of terminal, non-reducing beta-D-glucosyl residues with release of beta-D-glucose.. It participates in glycan metabolism; cellulose degradation. Beta-glucosidases are one of a number of cellulolytic enzymes involved in the degradation of cellulosic biomass. Catalyzes the last step releasing glucose from the inhibitory cellobiose. In Aspergillus niger (strain ATCC MYA-4892 / CBS 513.88 / FGSC A1513), this protein is Probable beta-glucosidase D (bglD).